Reading from the N-terminus, the 499-residue chain is MHIPIPMVQISEAEYRVLRAIQSRGATAIESELSVEGLSDREIASAISWLEVKGLLDVERREIKTYALSSEGKRYLREGLPELVLYRKLKERGEMTMDEIRDLMPDTYRIALAQLAKFGITPKEGKLIYRNSGIEAAIEERQRFLQSMDPKNTAMIDHFRHRSGVIDEKIRTERIVRLNDSAYEAIAEFGGEGLIGSLDPSIIASGEWKTKNFRKYDLNSPSSVIRSSLKHPMTYLIEEIREIFLNMGFTEMGGHYIESTLWDMDSLFIPQDHPARDMQDTFYVEADSFDIDHPEISKKIRKIHEKGFDGYSGWGYRWSDAEARKLVLRTHTTVSTARYLYENNEPPQAIFSVEKVFRHESVDWKHLAEFYQIEGAVYSKDVSVSTLKWILRDFYAKLGFNDIKLIPSYYPYTEPSLDVVVRVNGKEVELGGSGLFRPEVLKILGLKAPVMAWGMGLERLAMMYYGLTDVRDLYNTDFEFLSSFRFNISRNGRNNYGKA.

L-phenylalanine is bound by residues threonine 333, 372–374 (QIE), and tyrosine 412. A Mg(2+)-binding site is contributed by glutamate 414. Phenylalanine 436 lines the L-phenylalanine pocket.

The protein belongs to the class-II aminoacyl-tRNA synthetase family. Phe-tRNA synthetase alpha subunit type 2 subfamily. In terms of assembly, tetramer of two alpha and two beta subunits. Mg(2+) serves as cofactor.

The protein localises to the cytoplasm. It catalyses the reaction tRNA(Phe) + L-phenylalanine + ATP = L-phenylalanyl-tRNA(Phe) + AMP + diphosphate + H(+). The sequence is that of Phenylalanine--tRNA ligase alpha subunit from Thermoplasma acidophilum (strain ATCC 25905 / DSM 1728 / JCM 9062 / NBRC 15155 / AMRC-C165).